The following is a 346-amino-acid chain: Inositol 2-dehydrogenase/D-chiro-inositol 3-dehydrogenase (346 aa).

The protein belongs to the Gfo/Idh/MocA family. Homotetramer.

The catalysed reaction is myo-inositol + NAD(+) = scyllo-inosose + NADH + H(+). The enzyme catalyses 1D-chiro-inositol + NAD(+) = scyllo-inosine + NADH + H(+). It functions in the pathway polyol metabolism; myo-inositol degradation into acetyl-CoA; acetyl-CoA from myo-inositol: step 1/7. In terms of biological role, involved in the oxidation of myo-inositol (MI) and D-chiro-inositol (DCI) to 2-keto-myo-inositol (2KMI or 2-inosose) and 1-keto-D-chiro-inositol (1KDCI), respectively. This Lacticaseibacillus casei (Lactobacillus casei) protein is Inositol 2-dehydrogenase/D-chiro-inositol 3-dehydrogenase.